A 660-amino-acid polypeptide reads, in one-letter code: MTPATQYPCDPEGVCMRCKSMPPPEESLTCGTCVTPWHVSCLLSPPETLSATLQWLCPDCSGETNPLPVSGVAAGYGSVGSDLVAAIHSIEADETLSAEEKAKKKQQLLSGKGVVDEDDEEEKKKTSKGKKPIDVLSHFECSFCMQSLQKPVSVRVLFALALMLVWFLESTPCGHNACLKCFLKWMGQGHRSCGTCRSVIPESMVTNPRINLSIVSAIRLARVSEKADARTSKVVHYVDNEDRPDKAFTTERAKKTGNANASSGKIFVTIPRDHFGPIPAENDPVRNQGLLVGESWKGRLACRQWGAHFPHVSGIAGQASYGAQSVVLAGGYDDDEDHGEWFLYTGSGGRILKGNKRTNTVQAFDQVFLNFNEALRLSCKLGYPVRVVRSTKDKRSPYAPQGGLLRYDGVYRIEKCWRIVGIQMCRFLFVRCDNEPAPWTSDEHGDRPRPLPNVPELNMATDLFERKESPSWDFDEGEDRWRWMKPPPASKKAVKNVLDPEERKLLREAIKSANPNTMRARLLKEFKCQICQKVMTNPVTTPCAHNFCKACLESKFAGTALVRERGSGGRKLRSQKSVMKCPCCPTDIAEFVQNPQVNREVAEVIEKLKKQEEEENAKSLDEGQCSGTSHEEEDDEQPKKRIKLDTDAEVSATVVESDMK.

Residues 12-63 form a PHD-type zinc finger; sequence EGVCMRCKSMPPPEESLTCGTCVTPWHVSCLLSPPETLSATLQWLCPDCSGE. The disordered stretch occupies residues 107–129; the sequence is QLLSGKGVVDEDDEEEKKKTSKG. An RING-type 1 zinc finger spans residues 141 to 197; sequence CSFCMQSLQKPVSVRVLFALALMLVWFLESTPCGHNACLKCFLKWMGQGHRSCGTCR. Residues 285 to 434 form the YDG domain; sequence VRNQGLLVGE…CRFLFVRCDN (150 aa). An RING-type 2 zinc finger spans residues 528 to 585; it reads CQICQKVMTNPVTTPCAHNFCKACLESKFAGTALVRERGSGGRKLRSQKSVMKCPCCP. Residues 593 to 622 are a coiled coil; it reads QNPQVNREVAEVIEKLKKQEEEENAKSLDE. Composition is skewed to basic and acidic residues over residues 610–621 and 637–646; these read KQEEEENAKSLD and QPKKRIKLDT. Residues 610–660 form a disordered region; the sequence is KQEEEENAKSLDEGQCSGTSHEEEDDEQPKKRIKLDTDAEVSATVVESDMK.

The protein resides in the nucleus. It carries out the reaction S-ubiquitinyl-[E2 ubiquitin-conjugating enzyme]-L-cysteine + [acceptor protein]-L-lysine = [E2 ubiquitin-conjugating enzyme]-L-cysteine + N(6)-ubiquitinyl-[acceptor protein]-L-lysine.. The protein operates within protein modification; protein ubiquitination. In terms of biological role, E3 ubiquitin-protein ligase. May participate in CpG methylation-dependent transcriptional regulation. The sequence is that of E3 ubiquitin-protein ligase ORTHRUS 3 (ORTH3) from Arabidopsis thaliana (Mouse-ear cress).